A 551-amino-acid polypeptide reads, in one-letter code: Seed biotin-containing protein SBP65 (551 aa).

Positions 1 to 20 (MASEQLSRRENITTERKIQN) are enriched in basic and acidic residues. The disordered stretch occupies residues 1-29 (MASEQLSRRENITTERKIQNAEDSVPQRT). Position 103 is an N6-biotinyllysine; atypical (lysine 103). A coiled-coil region spans residues 141-211 (KGQVVEERER…RNTTQAAQEK (71 aa)). Disordered stretches follow at residues 197-265 (TNET…YEAT) and 518-551 (DEVE…NNVS). The span at 206–219 (QAAQEKGEAAQAKD) shows a compositional bias: low complexity. 2 stretches are compositionally biased toward polar residues: residues 223–242 (EKTQ…SART) and 250–265 (AKNT…YEAT). Residues 533–544 (HSLDRAKHEGYR) are compositionally biased toward basic and acidic residues.

This sequence belongs to the seed biotin-containing protein SBP65 family. As to expression, expressed in dry mature seeds.

May serve as a biotin source for several growth-limiting enzymes that are necessary during seed development and the subsequent germination stages, and thus may play some roles in determining seed germination capacity. This chain is Seed biotin-containing protein SBP65 (SBP65), found in Pisum sativum (Garden pea).